The primary structure comprises 175 residues: Adenylate kinase isoenzyme 6 homolog (175 aa).

ATP is bound by residues glycine 18, glycine 20, lysine 21, threonine 22, and threonine 23. Residues 38 to 61 (CIGDVVKENHLHFGFDEKWKTYDV) are NMPbind. Residues 113–123 (SRGYSLEKIQE) are LID. ATP is bound at residue arginine 114.

This sequence belongs to the adenylate kinase family. AK6 subfamily. In terms of assembly, interacts with small ribosomal subunit protein uS11. Not a structural component of 43S pre-ribosomes, but transiently interacts with them by binding to uS11.

It is found in the cytoplasm. Its subcellular location is the nucleus. It carries out the reaction AMP + ATP = 2 ADP. It catalyses the reaction ATP + H2O = ADP + phosphate + H(+). In terms of biological role, broad-specificity nucleoside monophosphate (NMP) kinase that catalyzes the reversible transfer of the terminal phosphate group between nucleoside triphosphates and monophosphates. Also has ATPase activity. Involved in the late cytoplasmic maturation steps of the 40S ribosomal particles, specifically 18S rRNA maturation. While NMP activity is not required for ribosome maturation, ATPase activity is. Associates transiently with small ribosomal subunit protein uS11. ATP hydrolysis breaks the interaction with uS11. May temporarily remove uS11 from the ribosome to enable a conformational change of the ribosomal RNA that is needed for the final maturation step of the small ribosomal subunit. Its NMP activity may have a role in nuclear energy homeostasis. The chain is Adenylate kinase isoenzyme 6 homolog (fap7) from Schizosaccharomyces pombe (strain 972 / ATCC 24843) (Fission yeast).